A 211-amino-acid chain; its full sequence is Ribonuclease HII (211 aa).

Positions 16–205 (APVCGVDEAG…VKAALAAAAV (190 aa)) constitute an RNase H type-2 domain. Residues aspartate 22, glutamate 23, and aspartate 114 each coordinate a divalent metal cation.

It belongs to the RNase HII family. It depends on Mn(2+) as a cofactor. Mg(2+) serves as cofactor.

It is found in the cytoplasm. It catalyses the reaction Endonucleolytic cleavage to 5'-phosphomonoester.. Its function is as follows. Endonuclease that specifically degrades the RNA of RNA-DNA hybrids. The chain is Ribonuclease HII (rnhB) from Caulobacter vibrioides (strain ATCC 19089 / CIP 103742 / CB 15) (Caulobacter crescentus).